Here is a 954-residue protein sequence, read N- to C-terminus: Xylanolytic transcriptional activator xlnR (954 aa).

2 disordered regions span residues 1-39 (MSTTSLQHFPHSYSPFSSSRSLNRMAQSQTSGLDTLAEG) and 51-93 (REAA…SQRD). The segment covering 8 to 21 (HFPHSYSPFSSSRS) has biased composition (low complexity). A compositionally biased stretch (polar residues) spans 22–33 (LNRMAQSQTSGL). A compositionally biased stretch (basic and acidic residues) spans 64-78 (GKPKDQFQVDNDNHH). A compositionally biased stretch (polar residues) spans 82-91 (SLSNFKNPSQ). Positions 119–145 (CDQCNQLRTKCDGQNPCAHCIDFGLTC) form a DNA-binding region, zn(2)-C6 fungal-type. Disordered regions lie at residues 173 to 226 (ATNS…HSEA), 310 to 333 (LMNPQEPNSTSISHFRLGSSTENP), 566 to 607 (ELPP…PGNT), and 758 to 777 (MDGSHPNHVSPSGRSSSTVE). A compositionally biased stretch (polar residues) spans 174 to 183 (TNSGQPNGSS). The span at 574–590 (ARPDAERDGDPDADLSK) shows a compositional bias: basic and acidic residues. Residues 764 to 777 (NHVSPSGRSSSTVE) are compositionally biased toward polar residues.

Belongs to the xlnR/xlr1 family.

The protein resides in the nucleus. Its function is as follows. Transcriptional activator of the xylanolytic system. Involved in the regulation of extracellular cellulolytic and xylanolytic genes and in the regulation of the intracellular activities of D-xylose catabolic genes in the pentose catabolic pathway (PCP) in response to the presence of D-xylose. This is Xylanolytic transcriptional activator xlnR (xlnR) from Aspergillus fumigatus (strain ATCC MYA-4609 / CBS 101355 / FGSC A1100 / Af293) (Neosartorya fumigata).